Here is a 238-residue protein sequence, read N- to C-terminus: NEDD4-binding protein 2-like 1 (238 aa).

2 disordered regions span residues 1 to 36 (MEDS…PRRH) and 183 to 212 (VLHA…WNTY). Over residues 20-31 (QPPPRPPPARGP) the composition is skewed to pro residues. Polar residues predominate over residues 192–212 (ANRNQGRNSEPSSGSGYWNTY).

In terms of assembly, interacts with dynactin subunit proteins, including DCTN4, DCTN5 and DCTN5.

In terms of biological role, might play a role in adipocyte differentiation and triglyceride accumulation. The chain is NEDD4-binding protein 2-like 1 (N4bp2l1) from Mus musculus (Mouse).